Here is a 260-residue protein sequence, read N- to C-terminus: NH(3)-dependent NAD(+) synthetase (260 aa).

31-38 (GLSGGLDS) is an ATP binding site. D37 provides a ligand contact to Mg(2+). R112 lines the deamido-NAD(+) pocket. Position 132 (T132) interacts with ATP. E137 is a Mg(2+) binding site. ATP is bound by residues K161 and S183.

It belongs to the NAD synthetase family. In terms of assembly, homodimer.

It catalyses the reaction deamido-NAD(+) + NH4(+) + ATP = AMP + diphosphate + NAD(+) + H(+). Its pathway is cofactor biosynthesis; NAD(+) biosynthesis; NAD(+) from deamido-NAD(+) (ammonia route): step 1/1. Catalyzes the ATP-dependent amidation of deamido-NAD to form NAD. Uses ammonia as a nitrogen source. The protein is NH(3)-dependent NAD(+) synthetase of Helicobacter pylori (strain J99 / ATCC 700824) (Campylobacter pylori J99).